We begin with the raw amino-acid sequence, 114 residues long: UPF0342 protein OEOE_0901 (114 aa).

The protein belongs to the UPF0342 family.

The sequence is that of UPF0342 protein OEOE_0901 from Oenococcus oeni (strain ATCC BAA-331 / PSU-1).